Here is a 42-residue protein sequence, read N- to C-terminus: Protein MGF 360-20R (42 aa).

The protein belongs to the asfivirus MGF 360 family.

Plays a role in virus cell tropism, and may be required for efficient virus replication in macrophages. The chain is Protein MGF 360-20R from African swine fever virus (strain Badajoz 1971 Vero-adapted) (Ba71V).